Here is a 486-residue protein sequence, read N- to C-terminus: B-type cell cycle switch protein ccs52B (486 aa).

A PEST motif motif is present at residues 24-36 (RLETLSTPPSSAS). Residues 27-36 (TLSTPPSSAS) show a composition bias toward polar residues. The segment at 27 to 57 (TLSTPPSSASPRAISNLSSTPSPSKSSKCSD) is disordered. A compositionally biased stretch (low complexity) spans 41–53 (SNLSSTPSPSKSS). The C-box motif lies at 57 to 63 (DRFIPCR). Positions 87–98 (AYNRLLKSELFG) match the CSM motif motif. 7 WD repeats span residues 177–214 (QDDF…VTKL), 218–257 (GPYD…KVRT), 260–297 (GHQT…DFIG), 301–340 (GHKS…PTLR), 343–385 (EHTA…QLNS), 387–428 (DTGS…KVAT), and 431–470 (GHSM…KTPA).

This sequence belongs to the WD repeat CDC20/Fizzy family. Mostly expressed in shoot apices and, to a lower extent, in roots, especially in root tips, and in hypocotyls. Expressed in nodulation-competent root zone but not in the nodules.

It participates in protein modification; protein ubiquitination. Component of the anaphase promoting complex/cyclosome (APC/C), a cell cycle-regulated E3 ubiquitin-protein ligase complex that controls progression through mitosis and the G1 phase of the cell cycle. The sequence is that of B-type cell cycle switch protein ccs52B from Medicago truncatula (Barrel medic).